The primary structure comprises 499 residues: Guanosine-5'-triphosphate,3'-diphosphate pyrophosphatase (499 aa).

This sequence belongs to the GppA/Ppx family. GppA subfamily.

The enzyme catalyses guanosine 3'-diphosphate 5'-triphosphate + H2O = guanosine 3',5'-bis(diphosphate) + phosphate + H(+). The protein operates within purine metabolism; ppGpp biosynthesis; ppGpp from GTP: step 2/2. In terms of biological role, catalyzes the conversion of pppGpp to ppGpp. Guanosine pentaphosphate (pppGpp) is a cytoplasmic signaling molecule which together with ppGpp controls the 'stringent response', an adaptive process that allows bacteria to respond to amino acid starvation, resulting in the coordinated regulation of numerous cellular activities. In Klebsiella pneumoniae subsp. pneumoniae (strain ATCC 700721 / MGH 78578), this protein is Guanosine-5'-triphosphate,3'-diphosphate pyrophosphatase.